The primary structure comprises 125 residues: Secretion system apparatus protein SsaO (125 aa).

This chain is Secretion system apparatus protein SsaO (ssaO), found in Salmonella typhimurium (strain LT2 / SGSC1412 / ATCC 700720).